Consider the following 83-residue polypeptide: Cytochrome b559 subunit alpha (83 aa).

Residues 21–35 form a helical membrane-spanning segment; sequence VIHSITIPSLFIAGW. Residue His-23 coordinates heme.

The protein belongs to the PsbE/PsbF family. As to quaternary structure, heterodimer of an alpha subunit and a beta subunit. PSII is composed of 1 copy each of membrane proteins PsbA, PsbB, PsbC, PsbD, PsbE, PsbF, PsbH, PsbI, PsbJ, PsbK, PsbL, PsbM, PsbT, PsbX, PsbY, PsbZ, Psb30/Ycf12, at least 3 peripheral proteins of the oxygen-evolving complex and a large number of cofactors. It forms dimeric complexes. Heme b serves as cofactor.

It is found in the plastid. It localises to the chloroplast thylakoid membrane. Its function is as follows. This b-type cytochrome is tightly associated with the reaction center of photosystem II (PSII). PSII is a light-driven water:plastoquinone oxidoreductase that uses light energy to abstract electrons from H(2)O, generating O(2) and a proton gradient subsequently used for ATP formation. It consists of a core antenna complex that captures photons, and an electron transfer chain that converts photonic excitation into a charge separation. This Piper cenocladum (Ant piper) protein is Cytochrome b559 subunit alpha.